The sequence spans 758 residues: 5-methyltetrahydropteroyltriglutamate--homocysteine methyltransferase (758 aa).

5-methyltetrahydropteroyltri-L-glutamate is bound by residues 16-19 (RELK) and K117. L-homocysteine contacts are provided by residues 436–438 (IGS) and E489. L-methionine is bound by residues 436–438 (IGS) and E489. 5-methyltetrahydropteroyltri-L-glutamate is bound by residues 520–521 (RC) and W566. Residue D604 participates in L-homocysteine binding. L-methionine is bound at residue D604. 5-methyltetrahydropteroyltri-L-glutamate is bound at residue E610. Zn(2+) contacts are provided by H646, C648, and E670. Residue H699 is the Proton donor of the active site. Position 731 (C731) interacts with Zn(2+).

This sequence belongs to the vitamin-B12 independent methionine synthase family. The cofactor is Zn(2+).

The enzyme catalyses 5-methyltetrahydropteroyltri-L-glutamate + L-homocysteine = tetrahydropteroyltri-L-glutamate + L-methionine. It participates in amino-acid biosynthesis; L-methionine biosynthesis via de novo pathway; L-methionine from L-homocysteine (MetE route): step 1/1. In terms of biological role, catalyzes the transfer of a methyl group from 5-methyltetrahydrofolate to homocysteine resulting in methionine formation. The polypeptide is 5-methyltetrahydropteroyltriglutamate--homocysteine methyltransferase (Ruthia magnifica subsp. Calyptogena magnifica).